Consider the following 243-residue polypeptide: Vesicle-associated membrane protein-associated protein B (243 aa).

An N-acetylalanine modification is found at Ala-2. Topologically, residues 2-218 are cytoplasmic; sequence AKVEQVLSLE…AALAASGKEE (217 aa). The MSP domain occupies 7-124; sequence VLSLEPQHEL…MDSKLRCVFE (118 aa). Ser-146 carries the phosphoserine modification. A Glycyl lysine isopeptide (Lys-Gly) (interchain with G-Cter in SUMO1) cross-link involves residue Lys-147. A Phosphoserine modification is found at Ser-159. A coiled-coil region spans residues 161–196; the sequence is LDDAEVKKVMEECRRLQGEVQRLREESRQLKEEDGL. Phosphoserine is present on Ser-206. Residues 219–239 form a helical; Anchor for type IV membrane protein membrane-spanning segment; the sequence is GLSARLLALVVLFFIVGVIIG.

This sequence belongs to the VAMP-associated protein (VAP) (TC 9.B.17) family. Homodimer, and heterodimer with VAPA. Interacts with VAMP1 and VAMP2. Interacts (via MSP domain) with ZFYVE27. Interacts with RMDN3. Interacts with KIF5A in a ZFYVE27-dependent manner. Interacts (via MSP domain) with STARD3 (via phospho-FFAT motif). Interacts with STARD3NL (via FFAT motif). Interacts with CERT1. Interacts with PLEKHA3 and SACM1L to form a ternary complex. Interacts with VPS13A (via FFAT motif). Interacts with RB1CC1 (via phosphorylated FFAT motif), MIGA2 (via phosphorylated FFAT motif), RMDN3 (via phosphorylated FFAT motif), OSBPL1A (via FFAT motif), KCNB1 (via phosphorylated FFAT motif) and KCNB2 (via phosphorylated FFAT motif). Interacts (via MSP domain) with WDR44; the interactions connect the endoplasmic reticulum (ER) with the endosomal tubule. In terms of tissue distribution, ubiquitous.

The protein localises to the endoplasmic reticulum membrane. Its function is as follows. Endoplasmic reticulum (ER)-anchored protein that mediates the formation of contact sites between the ER and endosomes via interaction with FFAT motif-containing proteins such as STARD3 or WDR44. Interacts with STARD3 in a FFAT motif phosphorylation dependent manner. Via interaction with WDR44 participates in neosynthesized protein export. Participates in the endoplasmic reticulum unfolded protein response (UPR) by inducing ERN1/IRE1 activity. Involved in cellular calcium homeostasis regulation. The chain is Vesicle-associated membrane protein-associated protein B from Rattus norvegicus (Rat).